The sequence spans 691 residues: DNA ligase (691 aa).

NAD(+) contacts are provided by residues 41–45 (DAEYD), 90–91 (SL), and glutamate 130. Lysine 132 serves as the catalytic N6-AMP-lysine intermediate. 4 residues coordinate NAD(+): arginine 153, glutamate 190, lysine 307, and lysine 331. Cysteine 425, cysteine 428, cysteine 443, and cysteine 449 together coordinate Zn(2+). Residues 610–691 (APQGVLAGKT…LHQLLEGNTR (82 aa)) form the BRCT domain.

This sequence belongs to the NAD-dependent DNA ligase family. LigA subfamily. The cofactor is Mg(2+). Mn(2+) serves as cofactor.

The enzyme catalyses NAD(+) + (deoxyribonucleotide)n-3'-hydroxyl + 5'-phospho-(deoxyribonucleotide)m = (deoxyribonucleotide)n+m + AMP + beta-nicotinamide D-nucleotide.. DNA ligase that catalyzes the formation of phosphodiester linkages between 5'-phosphoryl and 3'-hydroxyl groups in double-stranded DNA using NAD as a coenzyme and as the energy source for the reaction. It is essential for DNA replication and repair of damaged DNA. The chain is DNA ligase from Burkholderia multivorans (strain ATCC 17616 / 249).